Reading from the N-terminus, the 270-residue chain is Putative carbamate hydrolase RutD (270 aa).

It belongs to the AB hydrolase superfamily. Hydrolase RutD family.

It carries out the reaction carbamate + 2 H(+) = NH4(+) + CO2. Functionally, involved in pyrimidine catabolism. May facilitate the hydrolysis of carbamate, a reaction that can also occur spontaneously. This Escherichia coli (strain SMS-3-5 / SECEC) protein is Putative carbamate hydrolase RutD.